The following is a 452-amino-acid chain: Autophagy-related protein 32 (452 aa).

The tract at residues 1-28 (MSTKSQVTRRVRTSIATPEDGVHGNNQH) is disordered. Residues 336–356 (WAIWTASFTIGIGIGCCISLM) traverse the membrane as a helical segment.

The protein belongs to the ATG32 family.

The protein localises to the mitochondrion outer membrane. The protein resides in the vacuole membrane. It localises to the preautophagosomal structure membrane. Its function is as follows. Mitophagy-specific receptor that recruits the autophagic machinery to mitochondria and regulates selective degradation of mitochondria. Mitophagy contributes to regulate mitochondrial quantity and quality by eliminating the mitochondria to a basal level to fulfill cellular energy requirements and preventing excess ROS production. Recruits ATG11 to the surface of mitochondria. Also promotes autophagy-dependent peroxisome degradation. The sequence is that of Autophagy-related protein 32 (ATG32) from Eremothecium gossypii (strain ATCC 10895 / CBS 109.51 / FGSC 9923 / NRRL Y-1056) (Yeast).